Here is a 2049-residue protein sequence, read N- to C-terminus: Non-reducing polyketide synthase hmp3 (2049 aa).

Positions 9-246 (LYFGDQTDSW…NELSIHALQH (238 aa)) are N-terminal acylcarrier protein transacylase (SAT) domain. In terms of domain architecture, Ketosynthase family 3 (KS3) spans 365-793 (PGRIAIVGMA…GGNASLILED (429 aa)). Catalysis depends on for beta-ketoacyl synthase activity residues cysteine 538, histidine 673, and histidine 712. The interval 887 to 1146 (VFVFTGQGSH…VDFVGALGAL (260 aa)) is malonyl-CoA:ACP transacylase (MAT) domain. Serine 978 (for acyl/malonyl transferase activity) is an active-site residue. Residues 1265–1404 (QQIVEESSSP…AQTLQTSWNR (140 aa)) are N-terminal hotdog fold. The 309-residue stretch at 1265–1573 (QQIVEESSSP…FHEVSNNVLD (309 aa)) folds into the PKS/mFAS DH domain. The product template (PT) domain stretch occupies residues 1269–1572 (EESSSPSLHV…SFHEVSNNVL (304 aa)). Positions 1425 to 1573 (GHRMLPSILY…FHEVSNNVLD (149 aa)) are C-terminal hotdog fold. The 79-residue stretch at 1626 to 1704 (SSESELFHTI…DLRNEFARSS (79 aa)) folds into the Carrier domain. Serine 1663 carries the O-(pantetheine 4'-phosphoryl)serine modification. The disordered stretch occupies residues 1700 to 1747 (FARSSTSTPPSKTFSEFSIVDATPESTRSSSRAPSEKKEPAPASEKSE). Residues 1703 to 1717 (SSTSTPPSKTFSEFS) are compositionally biased toward low complexity. A compositionally biased stretch (polar residues) spans 1723 to 1732 (PESTRSSSRA). Over residues 1733–1747 (PSEKKEPAPASEKSE) the composition is skewed to basic and acidic residues. Residues 1761 to 1951 (SPLPSARITL…KRTAIIWAKK (191 aa)) are thioesterase (TE) domain.

The protein operates within secondary metabolite biosynthesis. Functionally, non-reducing polyketide synthase; part of the gene cluster that mediates the biosynthesis of hypothemycin, a resorcylic acid lactone (RAL) that irreversibly inhibits a subset of protein kinases with a conserved cysteine in the ATP binding site such as human ERK2. The first step is performed by both PKSs hmp3 and hmp8 and leads to the production of 7',8'-dehydrozearalenol (DHZ). The highly reducing PKS hpm8 synthesizes the reduced hexaketide (7S,11S,2E,8E)-7,11-dihydroxy-dodeca-2,8-dienoate, which is transferred downstream to the non-reducing PKS hpm3. Hpm3 then extends the reduced hexaketide to a nonaketide, after which regioselective cyclization and macrolactonization affords DHZ. The next step is the conversion of DHZ into aigialomycin C and is performed by the O-methyltransferase hmp5, the FAD-binding monooxygenase hmp7, and the cytochrome P450 monooxygenase hmp1. The wide substrate tolerance of the hmp5 and hmp7 implies that the reactions from DHZ to aigialomycin C can occur in any order. The steps from aigialomycin C to hypothemycin are less well established. The FAD-linked oxidoreductase hmp9 presumably catalyzes oxidation of the C-6' hydroxyl to a ketone. The timing of this oxidation is important, since the resulting enone functional group is a Michael acceptor that can react spontaneously with glutathione, an abundant metabolite in fungal cells. The glutathione S-transferase hmp2 catalyzes cis-trans isomerization of the 7',8' double bond with equilibrium favoring the trans isomer. The hpm6-encoded transporter might preferentially pump hypothemycin out of the cell relative to the trans isomer aigialomycin A. The cis-to-trans isomerization may be coupled with C-4' hydroxylation, since all known hypothemycin analogs containing the enone functional group also have hydroxyl groups at both C-4' and C-5'. This Hypomyces subiculosus (Nectria subiculosa) protein is Non-reducing polyketide synthase hmp3.